A 149-amino-acid polypeptide reads, in one-letter code: Small ribosomal subunit protein uS13 (149 aa).

Residues 118-149 are disordered; the sequence is GRRHELGLPVRGQRTKSTFRKGSSVGVRRKKR.

Belongs to the universal ribosomal protein uS13 family. Part of the 30S ribosomal subunit. Forms a loose heterodimer with protein S19. Forms two bridges to the 50S subunit in the 70S ribosome.

Located at the top of the head of the 30S subunit, it contacts several helices of the 16S rRNA. In the 70S ribosome it contacts the 23S rRNA (bridge B1a) and protein L5 of the 50S subunit (bridge B1b), connecting the 2 subunits; these bridges are implicated in subunit movement. The polypeptide is Small ribosomal subunit protein uS13 (Methanothermobacter thermautotrophicus (strain ATCC 29096 / DSM 1053 / JCM 10044 / NBRC 100330 / Delta H) (Methanobacterium thermoautotrophicum)).